The sequence spans 414 residues: Gamma-glutamyl phosphate reductase (414 aa).

The protein belongs to the gamma-glutamyl phosphate reductase family.

It is found in the cytoplasm. The catalysed reaction is L-glutamate 5-semialdehyde + phosphate + NADP(+) = L-glutamyl 5-phosphate + NADPH + H(+). Its pathway is amino-acid biosynthesis; L-proline biosynthesis; L-glutamate 5-semialdehyde from L-glutamate: step 2/2. Catalyzes the NADPH-dependent reduction of L-glutamate 5-phosphate into L-glutamate 5-semialdehyde and phosphate. The product spontaneously undergoes cyclization to form 1-pyrroline-5-carboxylate. The chain is Gamma-glutamyl phosphate reductase from Xanthomonas campestris pv. campestris (strain 8004).